The chain runs to 288 residues: MAAGKEIRGKIKSVENTKKITKAMEMVAASKMRKAQERMRAARPYSDKIRNVAANLSQANPEYTHAFMESNDAKATGFIVVTTDKGLCGGLNTNVLRAVTSKLKDLQAAGHDALAVAIGNKGLGFLNRVGAKVVSHATQLGDKPHLEKLIGPVKVLLDAYSEGKINAVYLCYTKFINTMRQEPVVEQLLPLTAAHLQADKDQHGWDYIYEPDAQTVIDDLLLRYVEALIYQAVAENMASEQSARMVAMKAATDNAGSVIGELKLIYNKTRQAAITKELSEIVAGAAAV.

This sequence belongs to the ATPase gamma chain family. In terms of assembly, F-type ATPases have 2 components, CF(1) - the catalytic core - and CF(0) - the membrane proton channel. CF(1) has five subunits: alpha(3), beta(3), gamma(1), delta(1), epsilon(1). CF(0) has three main subunits: a, b and c.

The protein localises to the cell inner membrane. Its function is as follows. Produces ATP from ADP in the presence of a proton gradient across the membrane. The gamma chain is believed to be important in regulating ATPase activity and the flow of protons through the CF(0) complex. This chain is ATP synthase gamma chain, found in Polaromonas sp. (strain JS666 / ATCC BAA-500).